Consider the following 70-residue polypeptide: Small ribosomal subunit protein bS21 (70 aa).

It belongs to the bacterial ribosomal protein bS21 family.

The chain is Small ribosomal subunit protein bS21 from Sulfurimonas denitrificans (strain ATCC 33889 / DSM 1251) (Thiomicrospira denitrificans (strain ATCC 33889 / DSM 1251)).